Here is a 148-residue protein sequence, read N- to C-terminus: Receptor activity-modifying protein 1 (148 aa).

A signal peptide spans M1–A26. 3 disulfides stabilise this stretch: C27–C82, C40–C72, and C57–C104. At C27 to I118 the chain is on the extracellular side. Residues L119–Q140 form a helical membrane-spanning segment. Residues S141 to V148 lie on the Cytoplasmic side of the membrane.

This sequence belongs to the RAMP family. Heterodimer of CALCRL and RAMP1; the interaction induces allosteric modulation of CALCRL function and CGRP1/CALCA and CGRP2/CALCB ligand specificity. Heterodimer of CALCR and RAMP1; interaction forms the AMYR1 receptor complex for amylin/IAPP and CGRP1/CALCA ligands. As to expression, expressed in many tissues including the uterus, bladder, brain, pancreas and gastro-intestinal tract.

The protein resides in the cell membrane. Functionally, accessory protein that interacts with and modulates the function of G-protein coupled receptors including calcitonin gene-related peptide type 1 receptor (CALCRL) and calcitonin receptor (CALCR). Required for the transport of CALCRL to the plasma membrane. Together with CALCRL, form the receptor complex for the calcitonin gene-related peptides CGRP1/CALCA and CGRP2/CALCB. Together with CALCR, form the AMYR1 receptor complex for amylin/IAPP and CGRP1/CALCA. The polypeptide is Receptor activity-modifying protein 1 (Homo sapiens (Human)).